The following is a 316-amino-acid chain: Pantothenate kinase (316 aa).

95–102 (GSVAVGKS) is an ATP binding site.

Belongs to the prokaryotic pantothenate kinase family.

The protein localises to the cytoplasm. It catalyses the reaction (R)-pantothenate + ATP = (R)-4'-phosphopantothenate + ADP + H(+). The protein operates within cofactor biosynthesis; coenzyme A biosynthesis; CoA from (R)-pantothenate: step 1/5. This is Pantothenate kinase from Shewanella pealeana (strain ATCC 700345 / ANG-SQ1).